Here is a 786-residue protein sequence, read N- to C-terminus: Pentatricopeptide repeat-containing protein At2g22070 (786 aa).

PPR repeat units follow at residues 48–78 (SVYL…MPLR), 79–109 (TAFS…LPQR), 110–144 (DSVS…GIEP), 145–179 (TQFT…GLRG), 180–214 (NVSV…DISS), 215–241 (WNAM…MAER), 242–276 (DIVT…SLLS), 278–312 (DRFT…GFDI), 313–347 (SGIV…DLKI), 350–376 (FTAL…LKDR), 377–411 (DVVA…GQRP), 412–446 (NSYT…GEIY), 447–477 (SVSV…IRCE), 479–513 (DTVS…GLRP), 514–548 (DHIT…DKII), and 550–580 (TLSH…MPIE). The interval 585-660 (TWGSLLSACR…EQGFSWIEVK (76 aa)) is type E motif. The interval 661 to 691 (HKVHVFGVEDGTHPEKNEIYMTMKKIWDEIK) is type E(+) motif. The tract at residues 692–786 (KMGYVPDTAS…DGFCSCRDYW (95 aa)) is type DYW motif.

The protein belongs to the PPR family. PCMP-H subfamily.

The sequence is that of Pentatricopeptide repeat-containing protein At2g22070 (PCMP-H41) from Arabidopsis thaliana (Mouse-ear cress).